Here is a 690-residue protein sequence, read N- to C-terminus: Proprotein convertase subtilisin/kexin type 9 (690 aa).

The N-terminal stretch at 1–28 is a signal peptide; sequence MGTVRSRRLWWPLPLLLLLLLGPAGARA. Positions 29–150 are excised as a propeptide; the sequence is QEDDDGDYEE…IEEDSYVFAQ (122 aa). Tyr36 is subject to Sulfotyrosine. Ser45 carries the phosphoserine modification. The region spanning 75-147 is the Inhibitor I9 domain; it reads TYVVVLKEET…VDYIEEDSYV (73 aa). The Peptidase S8 domain occupies 153-459; it reads PWNLERITPA…GWQLFCRTVW (307 aa). Catalysis depends on charge relay system residues Asp184 and His224. 2 cysteine pairs are disulfide-bonded: Cys221–Cys253 and Cys321–Cys356. Ser384 serves as the catalytic Charge relay system. The segment at 448 to 690 is C-terminal domain; it reads GAGWQLFCRT…HLAQASQELQ (243 aa). Cystine bridges form between Cys455/Cys525, Cys475/Cys524, and Cys484/Cys507. Residue Asn531 is glycosylated (N-linked (GlcNAc...) asparagine). Disulfide bonds link Cys532-Cys599, Cys550-Cys598, Cys560-Cys586, Cys606-Cys677, Cys624-Cys676, and Cys633-Cys652. A Phosphoserine modification is found at Ser686.

It belongs to the peptidase S8 family. Monomer. Can self-associate to form dimers and higher multimers which may have increased LDLR degrading activity. The precursor protein but not the mature protein may form multimers. Interacts with APOB, VLDLR, LRP8/APOER2 and BACE1. The full-length immature form (pro-PCSK9) interacts with SCNN1A, SCNN1B and SCNN1G. The pro-PCSK9 form (via C-terminal domain) interacts with LDLR. Interacts (via the C-terminal domain) with ANXA2 (via repeat Annexin 1); the interaction inhibits the degradation of LDLR. The cofactor is Ca(2+). Cleavage by furin and PCSK5 generates a truncated inactive protein that is unable to induce LDLR degradation. In terms of processing, undergoes autocatalytic cleavage in the endoplasmic reticulum to release the propeptide from the N-terminus and the cleavage of the propeptide is strictly required for its maturation and activation. The cleaved propeptide however remains associated with the catalytic domain through non-covalent interactions, preventing potential substrates from accessing its active site. As a result, it is secreted from cells as a propeptide-containing, enzymatically inactive protein. Post-translationally, phosphorylation protects the propeptide against proteolysis.

The protein resides in the cytoplasm. It localises to the secreted. It is found in the endosome. The protein localises to the lysosome. Its subcellular location is the cell surface. The protein resides in the endoplasmic reticulum. It localises to the golgi apparatus. With respect to regulation, its proteolytic activity is autoinhibited by the non-covalent binding of the propeptide to the catalytic domain. Inhibited by EGTA. Its function is as follows. Crucial player in the regulation of plasma cholesterol homeostasis. Binds to low-density lipid receptor family members: low density lipoprotein receptor (LDLR), very low density lipoprotein receptor (VLDLR), apolipoprotein E receptor (LRP1/APOER) and apolipoprotein receptor 2 (LRP8/APOER2), and promotes their degradation in intracellular acidic compartments. Acts via a non-proteolytic mechanism to enhance the degradation of the hepatic LDLR through a clathrin LDLRAP1/ARH-mediated pathway. May prevent the recycling of LDLR from endosomes to the cell surface or direct it to lysosomes for degradation. Can induce ubiquitination of LDLR leading to its subsequent degradation. Inhibits intracellular degradation of APOB via the autophagosome/lysosome pathway in a LDLR-independent manner. Involved in the disposal of non-acetylated intermediates of BACE1 in the early secretory pathway. Inhibits epithelial Na(+) channel (ENaC)-mediated Na(+) absorption by reducing ENaC surface expression primarily by increasing its proteasomal degradation. Regulates neuronal apoptosis via modulation of LRP8/APOER2 levels and related anti-apoptotic signaling pathways. This Lagothrix lagotricha (Brown woolly monkey) protein is Proprotein convertase subtilisin/kexin type 9 (PCSK9).